The primary structure comprises 175 residues: Co-chaperone protein HscB homolog (175 aa).

In terms of domain architecture, J spans 7 to 79 (SHFALFNLPE…LKRARYLLSL (73 aa)).

Belongs to the HscB family. As to quaternary structure, interacts with HscA and stimulates its ATPase activity.

Functionally, co-chaperone involved in the maturation of iron-sulfur cluster-containing proteins. Seems to help targeting proteins to be folded toward HscA. The sequence is that of Co-chaperone protein HscB homolog from Paraburkholderia phymatum (strain DSM 17167 / CIP 108236 / LMG 21445 / STM815) (Burkholderia phymatum).